The chain runs to 273 residues: Dermonecrotic toxin LruSicTox-alphaIC1c (273 aa).

The active site involves His5. Glu25 and Asp27 together coordinate Mg(2+). Catalysis depends on His41, which acts as the Nucleophile. 2 disulfides stabilise this stretch: Cys45/Cys51 and Cys47/Cys190. Residue Asp85 coordinates Mg(2+).

This sequence belongs to the arthropod phospholipase D family. Class II subfamily. It depends on Mg(2+) as a cofactor. In terms of tissue distribution, expressed by the venom gland.

It is found in the secreted. The catalysed reaction is an N-(acyl)-sphingosylphosphocholine = an N-(acyl)-sphingosyl-1,3-cyclic phosphate + choline. It carries out the reaction an N-(acyl)-sphingosylphosphoethanolamine = an N-(acyl)-sphingosyl-1,3-cyclic phosphate + ethanolamine. The enzyme catalyses a 1-acyl-sn-glycero-3-phosphocholine = a 1-acyl-sn-glycero-2,3-cyclic phosphate + choline. It catalyses the reaction a 1-acyl-sn-glycero-3-phosphoethanolamine = a 1-acyl-sn-glycero-2,3-cyclic phosphate + ethanolamine. Functionally, dermonecrotic toxins cleave the phosphodiester linkage between the phosphate and headgroup of certain phospholipids (sphingolipid and lysolipid substrates), forming an alcohol (often choline) and a cyclic phosphate. This toxin acts on sphingomyelin (SM). It may also act on ceramide phosphoethanolamine (CPE), lysophosphatidylcholine (LPC) and lysophosphatidylethanolamine (LPE), but not on lysophosphatidylserine (LPS), and lysophosphatidylglycerol (LPG). It acts by transphosphatidylation, releasing exclusively cyclic phosphate products as second products. Induces dermonecrosis, hemolysis, increased vascular permeability, edema, inflammatory response, and platelet aggregation. The protein is Dermonecrotic toxin LruSicTox-alphaIC1c of Loxosceles rufescens (Mediterranean recluse spider).